A 222-amino-acid chain; its full sequence is MTDYARYIDHTLLAANATEQQIIALCDEAVAHRFYAVCVNSGYVPLVAEKLKGTDVQVCSVIGFPLGAGLTASKAFEAKAAIDAGAQEIDMVINVGWLKSGKIAAVQADIQAVREVCAAIPLKVILETCLLDDEQIVLVCEMCRQLDVAFVKTSTGFSTGGAREEHVRLMRNTVGSEMGVKASGAVRDRQTAQRMIEAGATRIGTSSGVAIVSGEAAAAGNY.

Catalysis depends on aspartate 90, which acts as the Proton donor/acceptor. Lysine 152 serves as the catalytic Schiff-base intermediate with acetaldehyde. Lysine 181 functions as the Proton donor/acceptor in the catalytic mechanism.

It belongs to the DeoC/FbaB aldolase family. DeoC type 1 subfamily.

The protein localises to the cytoplasm. It carries out the reaction 2-deoxy-D-ribose 5-phosphate = D-glyceraldehyde 3-phosphate + acetaldehyde. It functions in the pathway carbohydrate degradation; 2-deoxy-D-ribose 1-phosphate degradation; D-glyceraldehyde 3-phosphate and acetaldehyde from 2-deoxy-alpha-D-ribose 1-phosphate: step 2/2. Functionally, catalyzes a reversible aldol reaction between acetaldehyde and D-glyceraldehyde 3-phosphate to generate 2-deoxy-D-ribose 5-phosphate. This is Deoxyribose-phosphate aldolase from Pectobacterium carotovorum subsp. carotovorum (strain PC1).